Reading from the N-terminus, the 332-residue chain is MKINLDRTSSGFCIGVQGTIHVAEEKLNQSGELYCLGDVVHNEVEVKRLEALGMETIDIPAFEELRDAEVLIRAHGEPPSTYETARRNNLAITDTTCPVVAKLQKTAKMLHQLGYQVIIYGKKIHPEVIGINGQCNDEGVVIKHPDLSDEAEIAPLDLGRKTALISQTTMDVPGFYELKKNLEKLFAEHGHRNPGTKSGEWMAVRDIDITSEKTGGRAMPELVYKDTICRQVSSRNGKLRDFALANDCIVFAAGRKSSNGQVLYSICKDANPHSYFIEDVDEIQPEWFVGENGKPVESVGICGATSTPMWLLEKVANYIGKTFGDDSGNPDA.

C13 is a binding site for [4Fe-4S] cluster. (2E)-4-hydroxy-3-methylbut-2-enyl diphosphate-binding residues include H41 and H75. Residues H41 and H75 each coordinate dimethylallyl diphosphate. Isopentenyl diphosphate is bound by residues H41 and H75. C97 contributes to the [4Fe-4S] cluster binding site. Residue H125 coordinates (2E)-4-hydroxy-3-methylbut-2-enyl diphosphate. H125 is a binding site for dimethylallyl diphosphate. H125 provides a ligand contact to isopentenyl diphosphate. The active-site Proton donor is the E127. Residue T168 coordinates (2E)-4-hydroxy-3-methylbut-2-enyl diphosphate. C229 serves as a coordination point for [4Fe-4S] cluster. The (2E)-4-hydroxy-3-methylbut-2-enyl diphosphate site is built by S257, S258, N259, and S306. Residues S257, S258, N259, and S306 each contribute to the dimethylallyl diphosphate site. Isopentenyl diphosphate contacts are provided by S257, S258, N259, and S306.

The protein belongs to the IspH family. Requires [4Fe-4S] cluster as cofactor.

It catalyses the reaction isopentenyl diphosphate + 2 oxidized [2Fe-2S]-[ferredoxin] + H2O = (2E)-4-hydroxy-3-methylbut-2-enyl diphosphate + 2 reduced [2Fe-2S]-[ferredoxin] + 2 H(+). The catalysed reaction is dimethylallyl diphosphate + 2 oxidized [2Fe-2S]-[ferredoxin] + H2O = (2E)-4-hydroxy-3-methylbut-2-enyl diphosphate + 2 reduced [2Fe-2S]-[ferredoxin] + 2 H(+). The protein operates within isoprenoid biosynthesis; dimethylallyl diphosphate biosynthesis; dimethylallyl diphosphate from (2E)-4-hydroxy-3-methylbutenyl diphosphate: step 1/1. It participates in isoprenoid biosynthesis; isopentenyl diphosphate biosynthesis via DXP pathway; isopentenyl diphosphate from 1-deoxy-D-xylulose 5-phosphate: step 6/6. Its function is as follows. Catalyzes the conversion of 1-hydroxy-2-methyl-2-(E)-butenyl 4-diphosphate (HMBPP) into a mixture of isopentenyl diphosphate (IPP) and dimethylallyl diphosphate (DMAPP). Acts in the terminal step of the DOXP/MEP pathway for isoprenoid precursor biosynthesis. The protein is 4-hydroxy-3-methylbut-2-enyl diphosphate reductase of Chlorobaculum parvum (strain DSM 263 / NCIMB 8327) (Chlorobium vibrioforme subsp. thiosulfatophilum).